The primary structure comprises 887 residues: Alanine--tRNA ligase (887 aa).

Positions 581, 585, 683, and 687 each coordinate Zn(2+).

It belongs to the class-II aminoacyl-tRNA synthetase family. The cofactor is Zn(2+).

Its subcellular location is the cytoplasm. It carries out the reaction tRNA(Ala) + L-alanine + ATP = L-alanyl-tRNA(Ala) + AMP + diphosphate. In terms of biological role, catalyzes the attachment of alanine to tRNA(Ala) in a two-step reaction: alanine is first activated by ATP to form Ala-AMP and then transferred to the acceptor end of tRNA(Ala). Also edits incorrectly charged Ser-tRNA(Ala) and Gly-tRNA(Ala) via its editing domain. This Ehrlichia ruminantium (strain Welgevonden) protein is Alanine--tRNA ligase.